The primary structure comprises 325 residues: HPr kinase/phosphorylase (325 aa).

Residues His-152 and Lys-173 contribute to the active site. ATP is bound at residue 167–174; that stretch reads GESGLGKS. Ser-174 contributes to the Mg(2+) binding site. Catalysis depends on Asp-191, which acts as the Proton acceptor; for phosphorylation activity. Proton donor; for dephosphorylation activity. Residues 215 to 224 are important for the catalytic mechanism of both phosphorylation and dephosphorylation; sequence LEVRGIGLLD. Position 216 (Glu-216) interacts with Mg(2+). Arg-258 is an active-site residue. The interval 279–284 is important for the catalytic mechanism of dephosphorylation; it reads AVDAGR.

Belongs to the HPrK/P family. As to quaternary structure, homohexamer. The cofactor is Mg(2+).

The catalysed reaction is [HPr protein]-L-serine + ATP = [HPr protein]-O-phospho-L-serine + ADP + H(+). The enzyme catalyses [HPr protein]-O-phospho-L-serine + phosphate + H(+) = [HPr protein]-L-serine + diphosphate. In terms of biological role, catalyzes the ATP- as well as the pyrophosphate-dependent phosphorylation of a specific serine residue in HPr, a phosphocarrier protein of the phosphoenolpyruvate-dependent sugar phosphotransferase system (PTS). HprK/P also catalyzes the pyrophosphate-producing, inorganic phosphate-dependent dephosphorylation (phosphorolysis) of seryl-phosphorylated HPr (P-Ser-HPr). In Leptothrix cholodnii (strain ATCC 51168 / LMG 8142 / SP-6) (Leptothrix discophora (strain SP-6)), this protein is HPr kinase/phosphorylase.